The following is a 431-amino-acid chain: Tyrosine--tRNA ligase (431 aa).

Y34 is an L-tyrosine binding site. The short motif at 39–48 (PTADSLHIGH) is the 'HIGH' region element. L-tyrosine-binding residues include Y171 and Q175. A 'KMSKS' region motif is present at residues 231-235 (KFGKT). Residue K234 coordinates ATP. Residues 353 to 422 (INVVEALVKT…GKYTILRRGK (70 aa)) form the S4 RNA-binding domain.

The protein belongs to the class-I aminoacyl-tRNA synthetase family. TyrS type 1 subfamily. In terms of assembly, homodimer.

It is found in the cytoplasm. It catalyses the reaction tRNA(Tyr) + L-tyrosine + ATP = L-tyrosyl-tRNA(Tyr) + AMP + diphosphate + H(+). Functionally, catalyzes the attachment of tyrosine to tRNA(Tyr) in a two-step reaction: tyrosine is first activated by ATP to form Tyr-AMP and then transferred to the acceptor end of tRNA(Tyr). The chain is Tyrosine--tRNA ligase from Neisseria meningitidis serogroup A / serotype 4A (strain DSM 15465 / Z2491).